The following is a 999-amino-acid chain: Cytoplasmic dynein 2 intermediate chain 1 (999 aa).

4 stretches are compositionally biased toward basic and acidic residues: residues 1–19 (MEPG…DDLR), 29–138 (PKEE…EEIR), 146–260 (LLSR…EDRH), and 268–300 (GLHY…KELE). The tract at residues 1–350 (MEPGKRRTKD…EHEAREKAEE (350 aa)) is disordered. Ser-250 bears the Phosphoserine mark. The segment covering 318–338 (LEDDFVDYEDDFEVCDGDDDS) has biased composition (acidic residues). A compositionally biased stretch (basic and acidic residues) spans 339-350 (NNEHEAREKAEE). The binding to the DYNLT2B-DYNLT1/DYNLT3 dimer stretch occupies residues 416 to 495 (ASHRQKSRSQ…DIQTEDIETR (80 aa)). WD repeat units lie at residues 637–677 (ICES…RIHH), 718–764 (AYKK…KADI), 850–890 (VRPI…PIMQ), and 895–935 (TSGH…LGPV).

It belongs to the dynein light intermediate chain family. As to quaternary structure, intermediate chain of the cytoplasmic dynein complex 2, a multisubunit complex, composed at least of eleven different proteins. The cytoplasmic dynein 2 complex consists of two catalytic heavy chains (HCs) and a number of non-catalytic subunits presented by intermediate chains (ICs), light intermediate chains (LICs) and light chains (LCs). Among them, a heavy chain (DYNC2H1), two intermediate chains (DYNC2I2 and DYNC2I1), a light intermediate chain (DYNC2LI1), and a light chain (DYNLT2B) are unique to the cytoplasmic dynein complex 2, but a subset of the light chains are also shared by dynein-1 and dynein-2 complexes. Interacts with DYNC2I2; their C-terminal domains each bind a copy of the heavy chain, and their extended N-terminal regions are held together by an array of light chain dimers. Interacts with DYNLT2B. Interacts (via the N-terminal half) with DYNLT2B-DYNLT1 dimer or with DYNLT2B-DYNLT3 dimer; this interaction is crucial for retrograde trafficking of ciliary proteins.

Its subcellular location is the cell projection. It localises to the cilium. The protein resides in the cytoplasm. It is found in the cytoskeleton. The protein localises to the microtubule organizing center. Its subcellular location is the centrosome. Functionally, acts as one of several non-catalytic accessory components of the cytoplasmic dynein 2 complex (dynein-2 complex), a motor protein complex that drives the movement of cargos along microtubules within cilia and flagella in concert with the intraflagellar transport (IFT) system. DYNC2I1 plays a major role in retrograde ciliary protein trafficking in cilia and flagella. Also requires to maintain a functional transition zone. The sequence is that of Cytoplasmic dynein 2 intermediate chain 1 (Dync2i1) from Mus musculus (Mouse).